Here is a 179-residue protein sequence, read N- to C-terminus: Large ribosomal subunit protein uL5 (179 aa).

The protein belongs to the universal ribosomal protein uL5 family. As to quaternary structure, part of the 50S ribosomal subunit; part of the 5S rRNA/L5/L18/L25 subcomplex. Contacts the 5S rRNA and the P site tRNA. Forms a bridge to the 30S subunit in the 70S ribosome.

This is one of the proteins that bind and probably mediate the attachment of the 5S RNA into the large ribosomal subunit, where it forms part of the central protuberance. In the 70S ribosome it contacts protein S13 of the 30S subunit (bridge B1b), connecting the 2 subunits; this bridge is implicated in subunit movement. Contacts the P site tRNA; the 5S rRNA and some of its associated proteins might help stabilize positioning of ribosome-bound tRNAs. The protein is Large ribosomal subunit protein uL5 of Burkholderia mallei (strain ATCC 23344).